The primary structure comprises 550 residues: Methyl-coenzyme M reductase I subunit alpha (550 aa).

Coenzyme F430 is bound at residue glutamine 147. Coenzyme B-binding positions include arginine 225, 256-257 (KH), and arginine 270. Histidine 257 is subject to Pros-methylhistidine. Arginine 271 is modified (5-methylarginine). Tyrosine 333 provides a ligand contact to coenzyme M. A 2-methylglutamine modification is found at glutamine 400. Tyrosine 444 is a coenzyme M binding site. Glycine 445 carries the 1-thioglycine modification. Aspartate 450 is subject to (Z)-2,3-didehydroaspartate. Position 452 is an S-methylcysteine (cysteine 452).

The protein belongs to the methyl-coenzyme M reductase alpha subunit family. In terms of assembly, MCR is a hexamer of two alpha, two beta, and two gamma chains, forming a dimer of heterotrimers. Coenzyme F430 is required as a cofactor. Post-translationally, the alpha subunit contains six modified amino acids near the active site region. Is methylated on His-257, Arg-271, Gln-400 and Cys-452, probably by the action of specific S-adenosylmethionine-dependent methyltransferases. Also contains a thioglycine at position 445, forming a thiopeptide bond. Contains a didehydroaspartate residue at position 450. The methylation on C5 of Arg-271 is a post-translational methylation not essential in vivo, but which plays a role for the stability and structural integrity of MCR.

It is found in the cytoplasm. It catalyses the reaction coenzyme B + methyl-coenzyme M = methane + coenzyme M-coenzyme B heterodisulfide. Its pathway is one-carbon metabolism; methyl-coenzyme M reduction; methane from methyl-coenzyme M: step 1/1. Methyl-coenzyme M reductase activity is inhibited by 3-nitrooxypropanol (3-NOP) in vitro and in vivo, by oxidation of its active site Ni(I), which stops both growth and methanogenesis. Is also inhibited by the reaction product CoM-S-S-CoB. Its function is as follows. Component of the methyl-coenzyme M reductase (MCR) I that catalyzes the reductive cleavage of methyl-coenzyme M (CoM-S-CH3 or 2-(methylthio)ethanesulfonate) using coenzyme B (CoB or 7-mercaptoheptanoylthreonine phosphate) as reductant which results in the production of methane and the mixed heterodisulfide of CoB and CoM (CoM-S-S-CoB). This is the final step in methanogenesis. Neither N-6-mercaptohexanoylthreonine phosphate (H-S-HxoTP) nor N-8-mercaptooctanoylthreonine phosphate (H-SOcoTP) nor any other thiol compound such as CoA or CoM can substitute for CoB as the electron donor. The polypeptide is Methyl-coenzyme M reductase I subunit alpha (mcrA) (Methanothermobacter marburgensis (strain ATCC BAA-927 / DSM 2133 / JCM 14651 / NBRC 100331 / OCM 82 / Marburg) (Methanobacterium thermoautotrophicum)).